Here is a 514-residue protein sequence, read N- to C-terminus: Maturase K (514 aa).

It belongs to the intron maturase 2 family. MatK subfamily.

The protein localises to the plastid. It is found in the chloroplast. In terms of biological role, usually encoded in the trnK tRNA gene intron. Probably assists in splicing its own and other chloroplast group II introns. The sequence is that of Maturase K from Tsuga canadensis (Eastern hemlock).